The sequence spans 192 residues: Large ribosomal subunit protein bL25 (192 aa).

Belongs to the bacterial ribosomal protein bL25 family. CTC subfamily. Part of the 50S ribosomal subunit; part of the 5S rRNA/L5/L18/L25 subcomplex. Contacts the 5S rRNA. Binds to the 5S rRNA independently of L5 and L18.

In terms of biological role, this is one of the proteins that binds to the 5S RNA in the ribosome where it forms part of the central protuberance. The polypeptide is Large ribosomal subunit protein bL25 (Marinomonas sp. (strain MWYL1)).